Here is a 338-residue protein sequence, read N- to C-terminus: Phosphoribosylformylglycinamidine cyclo-ligase (338 aa).

This sequence belongs to the AIR synthase family.

It localises to the cytoplasm. The catalysed reaction is 2-formamido-N(1)-(5-O-phospho-beta-D-ribosyl)acetamidine + ATP = 5-amino-1-(5-phospho-beta-D-ribosyl)imidazole + ADP + phosphate + H(+). The protein operates within purine metabolism; IMP biosynthesis via de novo pathway; 5-amino-1-(5-phospho-D-ribosyl)imidazole from N(2)-formyl-N(1)-(5-phospho-D-ribosyl)glycinamide: step 2/2. The protein is Phosphoribosylformylglycinamidine cyclo-ligase of Thermoplasma volcanium (strain ATCC 51530 / DSM 4299 / JCM 9571 / NBRC 15438 / GSS1).